Consider the following 309-residue polypeptide: Probable manganese-dependent inorganic pyrophosphatase (309 aa).

Positions 9, 13, 15, 75, 97, and 149 each coordinate Mn(2+).

It belongs to the PPase class C family. The cofactor is Mn(2+).

It is found in the cytoplasm. It carries out the reaction diphosphate + H2O = 2 phosphate + H(+). The protein is Probable manganese-dependent inorganic pyrophosphatase of Staphylococcus haemolyticus (strain JCSC1435).